The following is a 418-amino-acid chain: UDP-N-acetylglucosamine 1-carboxyvinyltransferase (418 aa).

A phosphoenolpyruvate-binding site is contributed by 22-23 (KN). Arg91 contributes to the UDP-N-acetyl-alpha-D-glucosamine binding site. Cys115 acts as the Proton donor in catalysis. Cys115 carries the post-translational modification 2-(S-cysteinyl)pyruvic acid O-phosphothioketal. Asp303 and Ile325 together coordinate UDP-N-acetyl-alpha-D-glucosamine.

It belongs to the EPSP synthase family. MurA subfamily.

It localises to the cytoplasm. The enzyme catalyses phosphoenolpyruvate + UDP-N-acetyl-alpha-D-glucosamine = UDP-N-acetyl-3-O-(1-carboxyvinyl)-alpha-D-glucosamine + phosphate. Its pathway is cell wall biogenesis; peptidoglycan biosynthesis. Cell wall formation. Adds enolpyruvyl to UDP-N-acetylglucosamine. The protein is UDP-N-acetylglucosamine 1-carboxyvinyltransferase of Syntrophobacter fumaroxidans (strain DSM 10017 / MPOB).